A 280-amino-acid polypeptide reads, in one-letter code: MTTTISQRKNRAAGANPLQKFWRKRRGDILPPIFGILGFLLLWQLISSAGLIKLPPPSSLWTDPRTRTLLMYPFYDQGGLDKGLFWQTLASLGRVAQGYSLAAIVGISTGILVGTQPLLDKALDPIFQFLRMVAPLAWVPIALVALQQNQPAAIFVIFITSVWPILINTTEGVKQIPQDYINVRKVLRLSPQKFFFKILIPSALPYIFTGLRIAIGLAWLAIIAAEIVMSGIVGIGFFIWDAYQQNYISEIILAVFYIGAVGLLLDRGIAYLQKLIAPGQ.

7 helical membrane passes run 32-52 (PIFG…AGLI), 99-119 (YSLA…QPLL), 126-146 (IFQF…LVAL), 153-173 (AIFV…TEGV), 198-218 (ILIP…IGLA), 219-239 (WLAI…GFFI), and 251-271 (IILA…GIAY). The ABC transmembrane type-1 domain occupies 88–266 (TLASLGRVAQ…YIGAVGLLLD (179 aa)).

This sequence belongs to the binding-protein-dependent transport system permease family. In terms of assembly, the complex is composed of two ATP-binding proteins (CmpC and CmpD), a transmembrane protein (CmpB) and a solute-binding protein (CmpA).

The protein resides in the cell inner membrane. In terms of biological role, part of the ABC transporter complex CmpABCD involved in bicarbonate transport. Probably responsible for the translocation of the substrate across the membrane. The protein is Bicarbonate transport system permease protein CmpB (cmpB) of Synechocystis sp. (strain ATCC 27184 / PCC 6803 / Kazusa).